We begin with the raw amino-acid sequence, 243 residues long: Calcium-binding protein LPS1-beta (243 aa).

7 EF-hand domains span residues 15-49 (EVIDAMKQEFKDNYDTNKDGTVSCAELAKLMDCPE), 47-82 (CPEEEAQRIITGVDVNCDGRMQFDEFLLYMEGYTKE), 85-120 (YSSDEIKQMFDDLDKDGNGRISPDELSKGVGEISTK), 121-156 (LVEGMANKLIQEADKDGDGHVNMEEFVDTLVAKLPL), 157-189 (CFKKCFHEDFDKNGDGSLTNAEMSQLLNRNLPG), 191-226 (YSEELINEMISRVDLNGDGRVQFGEFLMHAQNLSKD), and 227-243 (DIKNQFMAIDKDKNGKI). Asp29, Asn31, Asp33, Thr35, Glu40, Asp60, Asn62, Asp64, Arg66, Glu71, Asp98, Asp100, Asn102, Arg104, Glu109, Asp134, Asp136, Asp138, His140, Glu145, Asp167, Asn169, Asp171, Ser173, Glu178, Asp204, Asn206, Asp208, Arg210, and Glu215 together coordinate Ca(2+).

In terms of tissue distribution, aboral ectoderm, a squamous epithelium covering the surface of the late stage embryo and larva.

Calcium-binding protein involved in larval development and metamorphosis. Likely to function as calcium buffers mediating the transport of calcium from the sea water to the blastocoel where calcium is required for skeleton formation. This Lytechinus pictus (Painted sea urchin) protein is Calcium-binding protein LPS1-beta.